Consider the following 209-residue polypeptide: Thiamine-phosphate synthase (209 aa).

4-amino-2-methyl-5-(diphosphooxymethyl)pyrimidine contacts are provided by residues 36-40 and asparagine 68; that span reads QYRDK. Aspartate 69 and aspartate 87 together coordinate Mg(2+). Residue threonine 106 coordinates 4-amino-2-methyl-5-(diphosphooxymethyl)pyrimidine. 133 to 135 contributes to the 2-[(2R,5Z)-2-carboxy-4-methylthiazol-5(2H)-ylidene]ethyl phosphate binding site; that stretch reads SST. Lysine 136 contacts 4-amino-2-methyl-5-(diphosphooxymethyl)pyrimidine. Glycine 163 provides a ligand contact to 2-[(2R,5Z)-2-carboxy-4-methylthiazol-5(2H)-ylidene]ethyl phosphate.

The protein belongs to the thiamine-phosphate synthase family. The cofactor is Mg(2+).

It catalyses the reaction 2-[(2R,5Z)-2-carboxy-4-methylthiazol-5(2H)-ylidene]ethyl phosphate + 4-amino-2-methyl-5-(diphosphooxymethyl)pyrimidine + 2 H(+) = thiamine phosphate + CO2 + diphosphate. It carries out the reaction 2-(2-carboxy-4-methylthiazol-5-yl)ethyl phosphate + 4-amino-2-methyl-5-(diphosphooxymethyl)pyrimidine + 2 H(+) = thiamine phosphate + CO2 + diphosphate. The enzyme catalyses 4-methyl-5-(2-phosphooxyethyl)-thiazole + 4-amino-2-methyl-5-(diphosphooxymethyl)pyrimidine + H(+) = thiamine phosphate + diphosphate. Its pathway is cofactor biosynthesis; thiamine diphosphate biosynthesis; thiamine phosphate from 4-amino-2-methyl-5-diphosphomethylpyrimidine and 4-methyl-5-(2-phosphoethyl)-thiazole: step 1/1. Condenses 4-methyl-5-(beta-hydroxyethyl)thiazole monophosphate (THZ-P) and 2-methyl-4-amino-5-hydroxymethyl pyrimidine pyrophosphate (HMP-PP) to form thiamine monophosphate (TMP). This chain is Thiamine-phosphate synthase, found in Pseudomonas aeruginosa (strain UCBPP-PA14).